Reading from the N-terminus, the 529-residue chain is uncharacterized protein (529 aa).

Residues F354–L373 form a helical membrane-spanning segment.

It localises to the host membrane. This is an uncharacterized protein from Acidianus convivator (ATV).